We begin with the raw amino-acid sequence, 359 residues long: Photosystem II protein D1 1 (359 aa).

3 consecutive transmembrane segments (helical) span residues Tyr-29 to Ile-46, His-118 to Leu-133, and Trp-142 to Ala-156. His-118 is a chlorophyll a binding site. Tyr-126 is a pheophytin a binding site. Asp-170 and Glu-189 together coordinate [CaMn4O5] cluster. The chain crosses the membrane as a helical span at residues Phe-197–Leu-218. His-198 is a binding site for chlorophyll a. Residues His-215 and Ser-264–Phe-265 each bind a quinone. His-215 provides a ligand contact to Fe cation. A Fe cation-binding site is contributed by His-272. Residues Phe-274–Leu-288 traverse the membrane as a helical segment. Residues His-332, Glu-333, Asp-342, and Ala-344 each coordinate [CaMn4O5] cluster. A propeptide spanning residues Ala-345–Gly-359 is cleaved from the precursor.

It belongs to the reaction center PufL/M/PsbA/D family. PSII is composed of 1 copy each of membrane proteins PsbA, PsbB, PsbC, PsbD, PsbE, PsbF, PsbH, PsbI, PsbJ, PsbK, PsbL, PsbM, PsbT, PsbX, PsbY, PsbZ, Psb30/Ycf12, peripheral proteins PsbO, CyanoQ (PsbQ), PsbU, PsbV and a large number of cofactors. It forms dimeric complexes. Requires The D1/D2 heterodimer binds P680, chlorophylls that are the primary electron donor of PSII, and subsequent electron acceptors. It shares a non-heme iron and each subunit binds pheophytin, quinone, additional chlorophylls, carotenoids and lipids. D1 provides most of the ligands for the Mn4-Ca-O5 cluster of the oxygen-evolving complex (OEC). There is also a Cl(-1) ion associated with D1 and D2, which is required for oxygen evolution. The PSII complex binds additional chlorophylls, carotenoids and specific lipids. as cofactor. Post-translationally, tyr-161 forms a radical intermediate that is referred to as redox-active TyrZ, YZ or Y-Z. In terms of processing, C-terminally processed by CtpA; processing is essential to allow assembly of the oxygen-evolving complex and thus photosynthetic growth.

The protein resides in the cellular thylakoid membrane. It carries out the reaction 2 a plastoquinone + 4 hnu + 2 H2O = 2 a plastoquinol + O2. Photosystem II (PSII) is a light-driven water:plastoquinone oxidoreductase that uses light energy to abstract electrons from H(2)O, generating O(2) and a proton gradient subsequently used for ATP formation. It consists of a core antenna complex that captures photons, and an electron transfer chain that converts photonic excitation into a charge separation. The D1/D2 (PsbA/PsbD) reaction center heterodimer binds P680, the primary electron donor of PSII as well as several subsequent electron acceptors. The polypeptide is Photosystem II protein D1 1 (Parasynechococcus marenigrum (strain WH8102)).